The sequence spans 407 residues: Indoleamine 2,3-dioxygenase 1 (407 aa).

His350 lines the heme b pocket. A disordered region spans residues 362–407; sequence SKKKPTDGDKSEEPSNVESRGTGGTNPMTFLRSVKDTTEKALLSWP. Residues 365–374 are compositionally biased toward basic and acidic residues; sequence KPTDGDKSEE.

The protein belongs to the indoleamine 2,3-dioxygenase family. Monomer. The cofactor is heme b. As to expression, highly expressed in epididymis, duodemum, jejunum, ileum, colon and spleen. Highly expressed in epididymis, prostate, duodemum, jejunum, ileum, colon and spleen, not detected in the liver (at protein level). Expressed in tumors only upon exposure to IFN gamma. Constitutively expressed in placenta in trophoblast cells. Expression is restricted to perinuclear regions of primary trophoblast giant cells (TGCs) of fetal origin at mid-gestation (10.5 dpc). After placentation (14 dpc), no IDO expression was detected at the maternal-fetal interface.

The protein localises to the cytoplasm. It localises to the cytosol. The catalysed reaction is D-tryptophan + O2 = N-formyl-D-kynurenine. The enzyme catalyses L-tryptophan + O2 = N-formyl-L-kynurenine. With respect to regulation, activity is inhibited by and MTH-trp (methylthiohydantoin-DL-tryptophan), modestly inhibited by L-1MT (1-methyl-L-tryptophan) but not D-1MT (1-methyl-D-tryptophan). Catalyzes the first and rate limiting step of the catabolism of the essential amino acid tryptophan along the kynurenine pathway. Involved in the peripheral immune tolerance, contributing to maintain homeostasis by preventing autoimmunity or immunopathology that would result from uncontrolled and overreacting immune responses. Tryptophan shortage inhibits T lymphocytes division and accumulation of tryptophan catabolites induces T-cell apoptosis and differentiation of regulatory T-cells. Acts as a suppressor of anti-tumor immunity. Limits the growth of intracellular pathogens by depriving tryptophan. Protects the fetus from maternal immune rejection. The protein is Indoleamine 2,3-dioxygenase 1 of Mus musculus (Mouse).